Consider the following 243-residue polypeptide: tRNA pseudouridine synthase A (243 aa).

D53 (nucleophile) is an active-site residue. A substrate-binding site is contributed by Y111.

This sequence belongs to the tRNA pseudouridine synthase TruA family. As to quaternary structure, homodimer.

It carries out the reaction uridine(38/39/40) in tRNA = pseudouridine(38/39/40) in tRNA. Its function is as follows. Formation of pseudouridine at positions 38, 39 and 40 in the anticodon stem and loop of transfer RNAs. The protein is tRNA pseudouridine synthase A of Chlorobium phaeovibrioides (strain DSM 265 / 1930) (Prosthecochloris vibrioformis (strain DSM 265)).